Consider the following 479-residue polypeptide: Muscarinic acetylcholine receptor M4 (479 aa).

The Extracellular portion of the chain corresponds to 1–31 (MANFTPVNGSSGNQSVRLVTSSSHNRYETVE). 2 N-linked (GlcNAc...) asparagine glycosylation sites follow: Asn8 and Asn13. The helical transmembrane segment at 32–54 (MVFIATVTGSLSLVTVVGNILVM) threads the bilayer. The Cytoplasmic segment spans residues 55–68 (LSIKVNRQLQTVNN). The chain crosses the membrane as a helical span at residues 69-89 (YFLFSLACADLIIGAFSMNLY). At 90-106 (TVYIIKGYWPLGAVVCD) the chain is on the extracellular side. A disulfide bond links Cys105 and Cys185. Residues 107–128 (LWLALDYVVSNASVMNLLIISF) traverse the membrane as a helical segment. Residues 129–148 (DRYFCVTKPLTYPARRTTKM) are Cytoplasmic-facing. A helical transmembrane segment spans residues 149-171 (AGLMIAAAWVLSFVLWAPAILFW). Topologically, residues 172 to 193 (QFVVGKRTVPDNQCFIQFLSNP) are extracellular. A helical transmembrane segment spans residues 194–216 (AVTFGTAIAAFYLPVVIMTVLYI). Residues 217–401 (HISLASRSRV…AARERKVTRT (185 aa)) lie on the Cytoplasmic side of the membrane. The disordered stretch occupies residues 271–333 (KLEEAPPPAL…PAPPLQPRAL (63 aa)). A compositionally biased stretch (pro residues) spans 275–286 (APPPALPPPPRP). Positions 294 to 304 (NESSSGSATQN) are enriched in polar residues. The helical transmembrane segment at 402-422 (IFAILLAFILTWTPYNVMVLV) threads the bilayer. The Extracellular portion of the chain corresponds to 423–436 (NTFCQSCIPDTVWS). A helical membrane pass occupies residues 437 to 456 (IGYWLCYVNSTINPACYALC). The Cytoplasmic segment spans residues 457-479 (NATFKKTFRHLLLCQYRNIGTAR). A phosphothreonine mark is found at Thr459, Thr463, and Thr477.

The protein belongs to the G-protein coupled receptor 1 family. Muscarinic acetylcholine receptor subfamily. CHRM4 sub-subfamily.

The protein localises to the cell membrane. Its subcellular location is the postsynaptic cell membrane. Functionally, the muscarinic acetylcholine receptor mediates various cellular responses, including inhibition of adenylate cyclase, breakdown of phosphoinositides and modulation of potassium channels through the action of G proteins. Primary transducing effect is inhibition of adenylate cyclase. This chain is Muscarinic acetylcholine receptor M4 (CHRM4), found in Homo sapiens (Human).